Consider the following 399-residue polypeptide: Phosphate acyltransferase (399 aa).

This sequence belongs to the PlsX family. Homodimer. Probably interacts with PlsY.

It localises to the cytoplasm. The catalysed reaction is a fatty acyl-[ACP] + phosphate = an acyl phosphate + holo-[ACP]. Its pathway is lipid metabolism; phospholipid metabolism. Its function is as follows. Catalyzes the reversible formation of acyl-phosphate (acyl-PO(4)) from acyl-[acyl-carrier-protein] (acyl-ACP). This enzyme utilizes acyl-ACP as fatty acyl donor, but not acyl-CoA. The polypeptide is Phosphate acyltransferase (Rhodobacter capsulatus (Rhodopseudomonas capsulata)).